Consider the following 122-residue polypeptide: Large ribosomal subunit protein uL18 (122 aa).

This sequence belongs to the universal ribosomal protein uL18 family. As to quaternary structure, part of the 50S ribosomal subunit; part of the 5S rRNA/L5/L18/L25 subcomplex. Contacts the 5S and 23S rRNAs.

In terms of biological role, this is one of the proteins that bind and probably mediate the attachment of the 5S RNA into the large ribosomal subunit, where it forms part of the central protuberance. The sequence is that of Large ribosomal subunit protein uL18 from Lachnospira eligens (strain ATCC 27750 / DSM 3376 / VPI C15-48 / C15-B4) (Eubacterium eligens).